A 214-amino-acid polypeptide reads, in one-letter code: Adenylate kinase (214 aa).

An ATP-binding site is contributed by 10–15 (GAGKGT). The tract at residues 30 to 59 (STGDMLRAAVKAGTPLGLEAKKVMDAGQLV) is NMP. Residues threonine 31, arginine 36, 57-59 (QLV), 85-88 (GFPR), and glutamine 92 each bind AMP. Residues 122–159 (GRRVHPGSGRVYHVVFNPPKVEGKDDVTGEDLAIRPDD) are LID. Residues arginine 123 and 132 to 133 (VY) contribute to the ATP site. Residues arginine 156 and arginine 167 each coordinate AMP. An ATP-binding site is contributed by glutamine 200.

It belongs to the adenylate kinase family. Monomer.

Its subcellular location is the cytoplasm. The enzyme catalyses AMP + ATP = 2 ADP. It participates in purine metabolism; AMP biosynthesis via salvage pathway; AMP from ADP: step 1/1. In terms of biological role, catalyzes the reversible transfer of the terminal phosphate group between ATP and AMP. Plays an important role in cellular energy homeostasis and in adenine nucleotide metabolism. This is Adenylate kinase from Shewanella baltica (strain OS155 / ATCC BAA-1091).